A 214-amino-acid polypeptide reads, in one-letter code: Probable nicotinate-nucleotide adenylyltransferase (214 aa).

It belongs to the NadD family.

It catalyses the reaction nicotinate beta-D-ribonucleotide + ATP + H(+) = deamido-NAD(+) + diphosphate. It participates in cofactor biosynthesis; NAD(+) biosynthesis; deamido-NAD(+) from nicotinate D-ribonucleotide: step 1/1. Functionally, catalyzes the reversible adenylation of nicotinate mononucleotide (NaMN) to nicotinic acid adenine dinucleotide (NaAD). This Mycobacterium tuberculosis (strain ATCC 25177 / H37Ra) protein is Probable nicotinate-nucleotide adenylyltransferase.